Reading from the N-terminus, the 472-residue chain is Flap endonuclease 1 (472 aa).

The N-domain stretch occupies residues 1-106; sequence MGIKGLARFL…EELMKRKERR (106 aa). A Mg(2+)-binding site is contributed by Asp34. DNA is bound by residues Arg47 and Arg72. Mg(2+) contacts are provided by Asp88, Glu160, Glu162, Asp181, and Asp183. The interval 124–263 is I-domain; sequence TIRKQLIRTI…LTAYKLLKKH (140 aa). Glu160 lines the DNA pocket. DNA-binding residues include Gly241 and Asp243. Asp243 lines the Mg(2+) pocket. The segment at 348-356 is interaction with PCNA; the sequence is AQTSLDSFF.

The protein belongs to the XPG/RAD2 endonuclease family. FEN1 subfamily. As to quaternary structure, interacts with PCNA. Three molecules of FEN1 bind to one PCNA trimer with each molecule binding to one PCNA monomer. PCNA stimulates the nuclease activity without altering cleavage specificity. Requires Mg(2+) as cofactor. In terms of processing, phosphorylated. Phosphorylation upon DNA damage induces relocalization to the nuclear plasma.

It is found in the nucleus. The protein resides in the nucleolus. It localises to the nucleoplasm. The protein localises to the mitochondrion. Its function is as follows. Structure-specific nuclease with 5'-flap endonuclease and 5'-3' exonuclease activities involved in DNA replication and repair. During DNA replication, cleaves the 5'-overhanging flap structure that is generated by displacement synthesis when DNA polymerase encounters the 5'-end of a downstream Okazaki fragment. It enters the flap from the 5'-end and then tracks to cleave the flap base, leaving a nick for ligation. Also involved in the long patch base excision repair (LP-BER) pathway, by cleaving within the apurinic/apyrimidinic (AP) site-terminated flap. Acts as a genome stabilization factor that prevents flaps from equilibrating into structures that lead to duplications and deletions. Also possesses 5'-3' exonuclease activity on nicked or gapped double-stranded DNA, and exhibits RNase H activity. Also involved in replication and repair of rDNA and in repairing mitochondrial DNA. The chain is Flap endonuclease 1 from Cryptosporidium muris (strain RN66).